The primary structure comprises 430 residues: Enolase (430 aa).

(2R)-2-phosphoglycerate is bound at residue Gln167. Residue Glu209 is the Proton donor of the active site. Residues Asp246, Glu287, and Asp314 each coordinate Mg(2+). (2R)-2-phosphoglycerate-binding residues include Lys339, Arg368, Ser369, and Lys390. Lys339 serves as the catalytic Proton acceptor.

The protein belongs to the enolase family. Requires Mg(2+) as cofactor.

Its subcellular location is the cytoplasm. The protein localises to the secreted. The protein resides in the cell surface. It carries out the reaction (2R)-2-phosphoglycerate = phosphoenolpyruvate + H2O. The protein operates within carbohydrate degradation; glycolysis; pyruvate from D-glyceraldehyde 3-phosphate: step 4/5. Catalyzes the reversible conversion of 2-phosphoglycerate (2-PG) into phosphoenolpyruvate (PEP). It is essential for the degradation of carbohydrates via glycolysis. The sequence is that of Enolase from Prochlorococcus marinus (strain MIT 9312).